A 181-amino-acid polypeptide reads, in one-letter code: Ankyrin repeat-containing protein YGL242C (181 aa).

An N-acetylmethionine modification is found at Met-1. ANK repeat units lie at residues Leu-49–Ile-78 and Asp-85–Val-120. The disordered stretch occupies residues Ile-151–Lys-181. The segment covering Asn-160–Lys-181 has biased composition (acidic residues). Ser-172 is modified (phosphoserine).

The chain is Ankyrin repeat-containing protein YGL242C from Saccharomyces cerevisiae (strain ATCC 204508 / S288c) (Baker's yeast).